A 144-amino-acid polypeptide reads, in one-letter code: Large ribosomal subunit protein uL15 (144 aa).

The tract at residues 1 to 44 (MNLNELQPAAGSRKLRNRVGRGTSSGNGKTSGRGQKGQKARGKV) is disordered. The span at 23–35 (TSSGNGKTSGRGQ) shows a compositional bias: gly residues.

This sequence belongs to the universal ribosomal protein uL15 family. In terms of assembly, part of the 50S ribosomal subunit.

In terms of biological role, binds to the 23S rRNA. In Leuconostoc citreum (strain KM20), this protein is Large ribosomal subunit protein uL15.